A 532-amino-acid chain; its full sequence is MDDSIGVKRHWIWQGAFVLILAGVITKILSAVYRVPFQNIVGDVGFYIYQQVYPFLGIAVMLSTSGFPVIISKLMNDYSEKNHHTILKISALFLSLIGILLFLCLYLGAVPIALFMGDSHLAVLIQVAAYAFLLFPFVALLRGGFQGRHEMLPSALSQMTEQFLRVAVLLGLSFWLVKKGASLYTAGAAAASGSLAGSLVALIILGFFWFKTKRDNQTDRQNENVITTKELTKKLLLYSVTICVSSLLLLFIQLVDALNLYALLSGGEASEEAKCLKGIYDRGQPLLQLGSVFAVSIATSLVPYISMAVKNKELKIMKEKITSSLKLCLVLGTGASAGLICILKPVNIMLFQNGEGTGALQVFSCSILFASLAVTAAAVLQGAGYTVFPAIAVGAGVAVKWVLNTLLVPRYGIEGASLATAASFAAVAGLNLYQLRQKEWLDKLRGVLIPIIGSALLMSAVLLAYTRLWTFLFPATGRGAAVIESLSAVAIGGAVFIYCMMRLGIFTDEELNSVPFGSKLSKFMRRREQNGG.

14 helical membrane passes run 25–45 (ITKILSAVYRVPFQNIVGDVG), 65–85 (SGFPVIISKLMNDYSEKNHHT), 109–129 (AVPIALFMGDSHLAVLIQVAA), 134–154 (LFPFVALLRGGFQGRHEMLPS), 179–199 (KGASLYTAGAAAASGSLAGSL), 203–223 (IILGFFWFKTKRDNQTDRQNE), 248–268 (LLLFIQLVDALNLYALLSGGE), 302–322 (VPYISMAVKNKELKIMKEKIT), 344–364 (KPVNIMLFQNGEGTGALQVFS), 371–391 (SLAVTAAAVLQGAGYTVFPAI), 392–412 (AVGAGVAVKWVLNTLLVPRYG), 425–445 (AAVAGLNLYQLRQKEWLDKLR), 459–479 (SAVLLAYTRLWTFLFPATGRG), and 494–514 (AVFIYCMMRLGIFTDEELNSV).

Belongs to the polysaccharide synthase family.

The protein resides in the cell membrane. This is an uncharacterized protein from Bacillus subtilis (strain 168).